We begin with the raw amino-acid sequence, 202 residues long: Probable cytochrome c oxidase subunit 3 (202 aa).

Helical transmembrane passes span 30-50 (VVWL…YFTA), 69-89 (AVPV…GVFS), 101-121 (WYVI…YEYY), 141-161 (LATG…IFLL), and 178-198 (IVVS…FTVI).

The protein belongs to the cytochrome c oxidase subunit 3 family.

Its subcellular location is the cell membrane. The enzyme catalyses 4 Fe(II)-[cytochrome c] + O2 + 8 H(+)(in) = 4 Fe(III)-[cytochrome c] + 2 H2O + 4 H(+)(out). The sequence is that of Probable cytochrome c oxidase subunit 3 (ctaE) from Mycobacterium leprae (strain TN).